The primary structure comprises 416 residues: Phakinin (416 aa).

The segment at 1–48 (MSKRRVAADLPSGTNSSMPVQRHRVSSLRGTHSPSSLDSPPASRTSAV) is disordered. Residue serine 2 is modified to N-acetylserine. Residues 2 to 115 (SKRRVAADLP…HTTVEDLGGC (114 aa)) are head. A phosphoserine mark is found at serine 27, serine 33, serine 36, and serine 91. A compositionally biased stretch (polar residues) spans 28–48 (LRGTHSPSSLDSPPASRTSAV). Residues 105-416 (DHTTVEDLGG…HALLDREENN (312 aa)) enclose the IF rod domain. 3 coiled-coil regions span residues 116–146 (LVEY…SKAK), 170–249 (LENA…VKVL), and 308–402 (QTQE…LQKD). Residues 397-416 (SQLQKDVASYHALLDREENN) are tail.

This sequence belongs to the intermediate filament family. As to quaternary structure, part of a complex required for lens intermediate filament formation composed of BFSP1, BFSP2 and CRYAA. Found in a complex composed of PPL (via C-terminal linker domain), BFSP1 and BFSP2 in the retinal lens. Within the complex interacts with PPL (via C-terminal linker domain) and with BFSP1. Identified in a complex that contains VIM, EZR, AHNAK, BFSP1, BFSP2, ANK2, PLEC, PRX and spectrin. Interacts with LGSN. Interacts with VIM. As to expression, detected in retina lens fiber cells (at protein level). Also expressed in the lens epithelium, abundantly expressed in the anterior and anterolateral epithelium, less frequently expressed nearer the lens coronal equator (at protein level).

The protein localises to the cell membrane. Its subcellular location is the cytoplasm. It is found in the cytoskeleton. The protein resides in the cell cortex. In terms of biological role, required for the correct formation of lens intermediate filaments as part of a complex composed of BFSP1, BFSP2 and CRYAA. Plays a role in maintenance of retinal lens optical clarity. The polypeptide is Phakinin (Bfsp2) (Mus musculus (Mouse)).